A 333-amino-acid polypeptide reads, in one-letter code: UDP-3-O-acylglucosamine N-acyltransferase (333 aa).

The Proton acceptor role is filled by His-225.

The protein belongs to the transferase hexapeptide repeat family. LpxD subfamily. As to quaternary structure, homotrimer.

The enzyme catalyses a UDP-3-O-[(3R)-3-hydroxyacyl]-alpha-D-glucosamine + a (3R)-hydroxyacyl-[ACP] = a UDP-2-N,3-O-bis[(3R)-3-hydroxyacyl]-alpha-D-glucosamine + holo-[ACP] + H(+). It participates in bacterial outer membrane biogenesis; LPS lipid A biosynthesis. Functionally, catalyzes the N-acylation of UDP-3-O-acylglucosamine using 3-hydroxyacyl-ACP as the acyl donor. Is involved in the biosynthesis of lipid A, a phosphorylated glycolipid that anchors the lipopolysaccharide to the outer membrane of the cell. The polypeptide is UDP-3-O-acylglucosamine N-acyltransferase (Paracidovorax citrulli (strain AAC00-1) (Acidovorax citrulli)).